The following is a 283-amino-acid chain: Bifunctional protein FolD 2 (283 aa).

NADP(+) contacts are provided by residues G165–S167, S190, and I231.

This sequence belongs to the tetrahydrofolate dehydrogenase/cyclohydrolase family. In terms of assembly, homodimer.

It catalyses the reaction (6R)-5,10-methylene-5,6,7,8-tetrahydrofolate + NADP(+) = (6R)-5,10-methenyltetrahydrofolate + NADPH. The catalysed reaction is (6R)-5,10-methenyltetrahydrofolate + H2O = (6R)-10-formyltetrahydrofolate + H(+). It functions in the pathway one-carbon metabolism; tetrahydrofolate interconversion. Functionally, catalyzes the oxidation of 5,10-methylenetetrahydrofolate to 5,10-methenyltetrahydrofolate and then the hydrolysis of 5,10-methenyltetrahydrofolate to 10-formyltetrahydrofolate. The polypeptide is Bifunctional protein FolD 2 (Bordetella pertussis (strain Tohama I / ATCC BAA-589 / NCTC 13251)).